A 217-amino-acid polypeptide reads, in one-letter code: 3,4-dihydroxy-2-butanone 4-phosphate synthase (217 aa).

D-ribulose 5-phosphate is bound by residues 37–38 (RE), Asp42, 150–154 (RGGHT), and Glu174. Residue Glu38 participates in Mg(2+) binding. His153 serves as a coordination point for Mg(2+).

This sequence belongs to the DHBP synthase family. In terms of assembly, homodimer. Mg(2+) serves as cofactor. Requires Mn(2+) as cofactor.

It carries out the reaction D-ribulose 5-phosphate = (2S)-2-hydroxy-3-oxobutyl phosphate + formate + H(+). Its pathway is cofactor biosynthesis; riboflavin biosynthesis; 2-hydroxy-3-oxobutyl phosphate from D-ribulose 5-phosphate: step 1/1. Functionally, catalyzes the conversion of D-ribulose 5-phosphate to formate and 3,4-dihydroxy-2-butanone 4-phosphate. In Salmonella paratyphi A (strain ATCC 9150 / SARB42), this protein is 3,4-dihydroxy-2-butanone 4-phosphate synthase.